Here is a 136-residue protein sequence, read N- to C-terminus: Monothiol glutaredoxin-S3 (136 aa).

A Glutaredoxin domain is found at Glu18–Trp135. Cys38 provides a ligand contact to [2Fe-2S] cluster. Positions Ala133–Leu136 match the Responsive for interaction with TGA factors motif.

It belongs to the glutaredoxin family. CC-type subfamily.

Its subcellular location is the cytoplasm. It localises to the nucleus. Its function is as follows. May only reduce GSH-thiol disulfides, but not protein disulfides. The sequence is that of Monothiol glutaredoxin-S3 (GRXS3) from Oryza sativa subsp. japonica (Rice).